We begin with the raw amino-acid sequence, 446 residues long: Phosphoglucosamine mutase (446 aa).

Residue Ser103 is the Phosphoserine intermediate of the active site. Positions 103, 242, 244, and 246 each coordinate Mg(2+). Ser103 carries the post-translational modification Phosphoserine.

Belongs to the phosphohexose mutase family. It depends on Mg(2+) as a cofactor. Activated by phosphorylation.

The enzyme catalyses alpha-D-glucosamine 1-phosphate = D-glucosamine 6-phosphate. In terms of biological role, catalyzes the conversion of glucosamine-6-phosphate to glucosamine-1-phosphate. The protein is Phosphoglucosamine mutase of Vibrio atlanticus (strain LGP32) (Vibrio splendidus (strain Mel32)).